A 249-amino-acid polypeptide reads, in one-letter code: Aquaporin TIP4-3 (249 aa).

The next 2 helical transmembrane spans lie at 20-40 (GVLG…GAAM) and 56-76 (TAVA…GFHI). The NPA 1 motif lies at 82-84 (NPA). Helical transmembrane passes span 100-122 (SSLY…RWLT), 141-161 (GVVA…ATIL), and 169-189 (GAGP…GAAL). The short motif at 195–197 (NPA) is the NPA 2 element. The helical transmembrane segment at 214–234 (VYWVGPLAGGPLAVLVYECCF) threads the bilayer.

It belongs to the MIP/aquaporin (TC 1.A.8) family. TIP (TC 1.A.8.10) subfamily.

It localises to the vacuole membrane. In terms of biological role, aquaporins facilitate the transport of water and small neutral solutes across cell membranes. In Zea mays (Maize), this protein is Aquaporin TIP4-3 (TIP4-3).